Reading from the N-terminus, the 200-residue chain is ATP-dependent Clp protease proteolytic subunit (200 aa).

Serine 97 serves as the catalytic Nucleophile. Residue histidine 122 is part of the active site.

Belongs to the peptidase S14 family. Fourteen ClpP subunits assemble into 2 heptameric rings which stack back to back to give a disk-like structure with a central cavity, resembling the structure of eukaryotic proteasomes.

It localises to the cytoplasm. The enzyme catalyses Hydrolysis of proteins to small peptides in the presence of ATP and magnesium. alpha-casein is the usual test substrate. In the absence of ATP, only oligopeptides shorter than five residues are hydrolyzed (such as succinyl-Leu-Tyr-|-NHMec, and Leu-Tyr-Leu-|-Tyr-Trp, in which cleavage of the -Tyr-|-Leu- and -Tyr-|-Trp bonds also occurs).. Cleaves peptides in various proteins in a process that requires ATP hydrolysis. Has a chymotrypsin-like activity. Plays a major role in the degradation of misfolded proteins. The polypeptide is ATP-dependent Clp protease proteolytic subunit (Oleidesulfovibrio alaskensis (strain ATCC BAA-1058 / DSM 17464 / G20) (Desulfovibrio alaskensis)).